A 135-amino-acid polypeptide reads, in one-letter code: Putative pre-16S rRNA nuclease (135 aa).

Belongs to the YqgF nuclease family.

Its subcellular location is the cytoplasm. Functionally, could be a nuclease involved in processing of the 5'-end of pre-16S rRNA. The chain is Putative pre-16S rRNA nuclease from Clostridium novyi (strain NT).